The following is a 567-amino-acid chain: Major facilitator superfamily transporter MG061 (567 aa).

The next 12 helical transmembrane spans lie at 15–35, 78–98, 104–124, 193–213, 230–250, 264–284, 321–341, 363–383, 405–425, 426–446, 462–482, and 503–523; these read ITLWIIVIFGYLLFVVEWFVI, WTITLLRAVGSILCGVVVLKF, VLIMMGIMCVCFPFLIIGDPL, GYALFIIFRSTIAIGGTTLVV, ILSNANLWGFNIGIAVVFTPF, VYIMTVMILVVFANLCLFLWF, LIGVYGIVLILIVNPLTPAWF, TGLATLAIFWVIGYALGFVVF, IVVLLIIIMFAATLGIGSAAG, FALISIFSFIGGAFAWSLSSS, LPILFGFCWGFGYIAYTLFDI, and PGVIVSIVFFLGLIALANLIV.

This sequence belongs to the major facilitator superfamily.

The protein localises to the cell membrane. This chain is Major facilitator superfamily transporter MG061, found in Mycoplasma genitalium (strain ATCC 33530 / DSM 19775 / NCTC 10195 / G37) (Mycoplasmoides genitalium).